Here is an 840-residue protein sequence, read N- to C-terminus: MTQAALAMSMTDPIDTTADAGLMARIDSACQRIAPLWPLKHFVAVNPFLGFTGQSFAATAATFERVVRTRMLMPRAFYRQALDDGRIDDAALAQALGAHPSTGLELNELKQKARAEAGTSSPPAVVATVAEVLDRLAEGDRYVSLVAFMIDEISAFCATYFDEGQASWPSPVRKLKPYAAWRTIAAYDRNPEVMGLTGFRKAIAELPADPVQAIGVIVDRLGIPERAVEDYLVRALFDLGGWSAYARYIGWSAGLDGQRDDTLLELLAIRLAWGYALYQARTDDAFKAAWAQAMAEAAKLPADQRLEETPELAIDLVLHEAYEIALRSKLVARLAGHGAQAVTRLPARPPVQAAFCIDVRSEIFRRALETAYPDAETIGFAGFFGFPIEYVPIGHSKGGAQCPVLLKPAFIVCEAVKDADDVEQSEVLGLRLLRRRAAKALKSFKVSAVSSFSFVETAGLGFAAKIATDSAGVTRPVPSPVVDGLDPEIAARVQPRLTPGELAGRATGFTDPQRVAMAEAVLKAMSLTGPFARLVLLAGHGSTTVNNPHASGLDCGACGGHTGEANARVAAAVLNDWQVREGLRAKGIDIPADCWFIGALHDTTTDDVTLFDEDDVPATLAQDLARLKARLTEAARLARLERSALLGISNKAAVDEAVIARSRDWSQVRPEWGLAGNTAFIAAPRSFTRGLNLGGRAFLHSYEAARDDGHRTLELIMTAPMVVASWINLQYYGSTVNNAAFGSGNKVLHNIVGQLGVLEGNAGDLRVGLPWQSVHDGSRLIHEPVRLNVFIAAPEAAMDEIMQRHQGVRDLVVNGWVMLHSLSDQGTIRRCVRPGEWRSA.

Positions 356, 358, 540, and 555 each coordinate Zn(2+).

This sequence belongs to the inorganic carbon transporter (TC 9.A.2) DabA family. In terms of assembly, forms a complex with DabB. Zn(2+) serves as cofactor.

Its subcellular location is the cell inner membrane. In terms of biological role, part of an energy-coupled inorganic carbon pump. The chain is Probable inorganic carbon transporter subunit DabA 2 from Bradyrhizobium sp. (strain ORS 278).